We begin with the raw amino-acid sequence, 427 residues long: Steroid C26-monooxygenase (427 aa).

A heme-binding site is contributed by Cys360.

The protein belongs to the cytochrome P450 family. The cofactor is heme.

The catalysed reaction is cholest-4-en-3-one + 6 reduced [2Fe-2S]-[ferredoxin] + 3 O2 + 5 H(+) = (25S)-3-oxocholest-4-en-26-oate + 6 oxidized [2Fe-2S]-[ferredoxin] + 4 H2O. Its pathway is steroid metabolism; cholesterol degradation. Its function is as follows. Involved in the utilization of cholesterol as the sole carbon and energy source by degrading the side chain. Primarily catalyzes the sequential oxidation of the terminal methyl of cholest-4-en-3-one into (25S)-26-hydroxycholest-4-en-3-one (alcohol), (25S)-26-oxocholest-4-en-3-one (aldehyde), to finally yield the carboxylic acid (25S)-3-oxocholest-4-en-26-oate. Also able to sequentially oxidize cholesterol itself, not only cholest-4-en-3-one. This chain is Steroid C26-monooxygenase, found in Mycolicibacterium smegmatis (strain ATCC 700084 / mc(2)155) (Mycobacterium smegmatis).